The following is a 183-amino-acid chain: Adenine phosphoribosyltransferase (183 aa).

The protein belongs to the purine/pyrimidine phosphoribosyltransferase family. Homodimer.

It localises to the cytoplasm. It catalyses the reaction AMP + diphosphate = 5-phospho-alpha-D-ribose 1-diphosphate + adenine. Its pathway is purine metabolism; AMP biosynthesis via salvage pathway; AMP from adenine: step 1/1. Its function is as follows. Catalyzes a salvage reaction resulting in the formation of AMP, that is energically less costly than de novo synthesis. The protein is Adenine phosphoribosyltransferase of Citrobacter koseri (strain ATCC BAA-895 / CDC 4225-83 / SGSC4696).